Here is a 26-residue protein sequence, read N- to C-terminus: Conotoxin Eb6.17 (26 aa).

2 disulfide bridges follow: Cys7–Cys18 and Cys13–Cys25.

The protein belongs to the conotoxin O1 superfamily. Expressed by the venom duct.

It localises to the secreted. The protein is Conotoxin Eb6.17 (E1) of Conus ebraeus (Hebrew cone).